The following is a 316-amino-acid chain: MKPTVVSADVLFEDHRAALKWQWVAGLGASERRFDEVAVRAARSGADLVGYLNYIHPYRVQILGEREVAYLTNESPDDCARRISRIITLEPPVLVVADDQTAPDTLLSMCERAQLPMFATPESAAFVIDVLRAYLSKHFADRTSMHGVFMDILGMGVMITGESGLGKSELGLELISRGHGLVADDAVDLYRINQTTIEGRCPELLQNLLEVRGIGLLDIKAIFGETAVRRKMRLKMIVHLVRRETLERDYERIPYEPLTQDVLGIPVRKVIIQVEAGRNIAVLVEAAVRNAILQLRGINTYQEFVERHRKAMEQDD.

Catalysis depends on residues histidine 146 and lysine 167. Position 161-168 (161-168) interacts with ATP; it reads GESGLGKS. Serine 168 contacts Mg(2+). The Proton acceptor; for phosphorylation activity. Proton donor; for dephosphorylation activity role is filled by aspartate 185. Residues 209–218 are important for the catalytic mechanism of both phosphorylation and dephosphorylation; it reads LEVRGIGLLD. Residue glutamate 210 coordinates Mg(2+). Arginine 252 is a catalytic residue. The segment at 273-278 is important for the catalytic mechanism of dephosphorylation; sequence QVEAGR.

The protein belongs to the HPrK/P family. Homohexamer. Mg(2+) serves as cofactor.

It carries out the reaction [HPr protein]-L-serine + ATP = [HPr protein]-O-phospho-L-serine + ADP + H(+). It catalyses the reaction [HPr protein]-O-phospho-L-serine + phosphate + H(+) = [HPr protein]-L-serine + diphosphate. Catalyzes the ATP- as well as the pyrophosphate-dependent phosphorylation of a specific serine residue in HPr, a phosphocarrier protein of the phosphoenolpyruvate-dependent sugar phosphotransferase system (PTS). HprK/P also catalyzes the pyrophosphate-producing, inorganic phosphate-dependent dephosphorylation (phosphorolysis) of seryl-phosphorylated HPr (P-Ser-HPr). The protein is HPr kinase/phosphorylase of Polaromonas sp. (strain JS666 / ATCC BAA-500).